Here is a 184-residue protein sequence, read N- to C-terminus: Peptidyl-tRNA hydrolase (184 aa).

Residue Y14 coordinates tRNA. H19 serves as the catalytic Proton acceptor. Residues F60 and N62 each coordinate tRNA.

Belongs to the PTH family. Monomer.

It is found in the cytoplasm. It carries out the reaction an N-acyl-L-alpha-aminoacyl-tRNA + H2O = an N-acyl-L-amino acid + a tRNA + H(+). Functionally, hydrolyzes ribosome-free peptidyl-tRNAs (with 1 or more amino acids incorporated), which drop off the ribosome during protein synthesis, or as a result of ribosome stalling. Catalyzes the release of premature peptidyl moieties from peptidyl-tRNA molecules trapped in stalled 50S ribosomal subunits, and thus maintains levels of free tRNAs and 50S ribosomes. The protein is Peptidyl-tRNA hydrolase of Mesomycoplasma hyopneumoniae (strain 7448) (Mycoplasma hyopneumoniae).